We begin with the raw amino-acid sequence, 294 residues long: Type 4 apparatus protein DotZ (294 aa).

The T4BSS is a complex nanomachine composed of several subcomplexes. This subunit is part of the Type IV Coupling Complex (T4CC), a subcomplex composed of the DotLMNYZ core and the IcmSW-LvgA adapter subunits, linked by the C-terminal tail of DotL. Six DotLMNYZ hetero-pentameric units may assemble into a hexameric nanomachine, forming an inner membrane channel for effectors to pass through. Makes significant contact with DotN and DotY, but engages weakly with DotM and DotL. DotY and DotZ are co-dependent for the assembly into the T4CC.

It localises to the cytoplasm. Component of the Dot/Icm type IVB secretion system (T4BSS), which is used to inject bacterial effector proteins into eukaryotic host cells. Part of a subcomplex which recruits effector proteins and delivers them to the core transmembrane subcomplex. DotY and DotZ play a role in effector translocation, but are not essential and do not influence the stability of the subcomplex main components. The DotY/DotZ main function is to optimize secretion by modulating the delivery trajectory of the IcmSW module and the localization of the machinery to the poles. This is Type 4 apparatus protein DotZ from Legionella pneumophila subsp. pneumophila (strain Philadelphia 1 / ATCC 33152 / DSM 7513).